We begin with the raw amino-acid sequence, 47 residues long: Large ribosomal subunit protein bL33C (47 aa).

Belongs to the bacterial ribosomal protein bL33 family.

The polypeptide is Large ribosomal subunit protein bL33C (Staphylococcus aureus (strain MRSA252)).